Consider the following 236-residue polypeptide: Phosphoribosylaminoimidazole-succinocarboxamide synthase (236 aa).

The protein belongs to the SAICAR synthetase family.

The enzyme catalyses 5-amino-1-(5-phospho-D-ribosyl)imidazole-4-carboxylate + L-aspartate + ATP = (2S)-2-[5-amino-1-(5-phospho-beta-D-ribosyl)imidazole-4-carboxamido]succinate + ADP + phosphate + 2 H(+). The protein operates within purine metabolism; IMP biosynthesis via de novo pathway; 5-amino-1-(5-phospho-D-ribosyl)imidazole-4-carboxamide from 5-amino-1-(5-phospho-D-ribosyl)imidazole-4-carboxylate: step 1/2. This Pelodictyon phaeoclathratiforme (strain DSM 5477 / BU-1) protein is Phosphoribosylaminoimidazole-succinocarboxamide synthase.